We begin with the raw amino-acid sequence, 29 residues long: Cytochrome b6-f complex subunit 8 (29 aa).

A helical transmembrane segment spans residues 3–23 (ILTLGWVGLLGLFTYSIAMVV).

The protein belongs to the PetN family. The 4 large subunits of the cytochrome b6-f complex are cytochrome b6, subunit IV (17 kDa polypeptide, PetD), cytochrome f and the Rieske protein, while the 4 small subunits are PetG, PetL, PetM and PetN. The complex functions as a dimer.

Its subcellular location is the cellular thylakoid membrane. Component of the cytochrome b6-f complex, which mediates electron transfer between photosystem II (PSII) and photosystem I (PSI), cyclic electron flow around PSI, and state transitions. The chain is Cytochrome b6-f complex subunit 8 from Cyanothece sp. (strain PCC 7425 / ATCC 29141).